A 684-amino-acid polypeptide reads, in one-letter code: Protein SEEDLING PLASTID DEVELOPMENT 1 (684 aa).

The transit peptide at 1–78 (MRALNSRLVL…FSFDVRSPSS (78 aa)) directs the protein to the chloroplast. The disordered stretch occupies residues 33–91 (SDSSSSFRRTRGARQRIASSKSPASSPSPVRRPSDGFSFDVRSPSSDSSISSRKSPTTA). Residues 50-88 (ASSKSPASSPSPVRRPSDGFSFDVRSPSSDSSISSRKSP) are compositionally biased toward low complexity. Residue 220-227 (GSPGVGKT) participates in ATP binding. The tract at residues 651-684 (PRRSTKKTLTSSSPQKSADGSMGTTGTRLPFLKD) is disordered. A compositionally biased stretch (low complexity) spans 657 to 667 (KTLTSSSPQKS).

It belongs to the ycf45 family.

The protein localises to the plastid. It localises to the chloroplast membrane. It is found in the chloroplast envelope. Its function is as follows. Required during eoplast (a highly reduced plastid type present during the degreening and dehydration stages of seed maturation) development in embryos and early stages of eoplast redifferentiation during seedling growth. The protein is Protein SEEDLING PLASTID DEVELOPMENT 1 of Arabidopsis thaliana (Mouse-ear cress).